The chain runs to 366 residues: Short-chain collagen C4 (366 aa).

The span at 1 to 14 (DTGPQGPQGVAGPP) shows a compositional bias: low complexity. Triple-helical region regions lie at residues 1–23 (DTGPQGPQGVAGPPGIDGAKGDK) and 40–210 (GPPG…NGAV). Residues 1 to 207 (DTGPQGPQGV…QGPQGAPGSN (207 aa)) are disordered. A compositionally biased stretch (pro residues) spans 28–45 (YPPPPTCPTCPAGPPGAP). Low complexity-rich tracts occupy residues 75 to 90 (PGNDGQPGAPGAPGYD) and 99 to 110 (TGAPGPQGPKGD). Basic and acidic residues predominate over residues 138-149 (DGQDGAKGDKGD). 2 stretches are compositionally biased toward low complexity: residues 150 to 168 (QGPAGTPGAPGKDGAQGPA) and 189 to 201 (QGPKGDVGPQGPQ).

The protein localises to the secreted. The protein resides in the extracellular space. Its subcellular location is the extracellular matrix. The protein is Short-chain collagen C4 of Ephydatia muelleri (Mueller's freshwater sponge).